The primary structure comprises 231 residues: Beta-casein (231 aa).

The signal sequence occupies residues 1 to 15; the sequence is MKVFILACLVALALA. S24 is modified (phosphoserine). The residue at position 27 (T27) is a Phosphothreonine. Phosphoserine is present on residues S29, S31, and S32.

Belongs to the beta-casein family. Mammary gland specific. Secreted in milk.

The protein resides in the secreted. Its function is as follows. Important role in determination of the surface properties of the casein micelles. In Rattus norvegicus (Rat), this protein is Beta-casein (Csn2).